The primary structure comprises 42 residues: Photosystem II reaction center protein J (42 aa).

Residues 10–30 form a helical membrane-spanning segment; it reads IPLWLVGTVVGTLAIGLLAVF.

It belongs to the PsbJ family. PSII is composed of 1 copy each of membrane proteins PsbA, PsbB, PsbC, PsbD, PsbE, PsbF, PsbH, PsbI, PsbJ, PsbK, PsbL, PsbM, PsbT, PsbX, PsbY, PsbZ, Psb30/Ycf12, at least 3 peripheral proteins of the oxygen-evolving complex and a large number of cofactors. It forms dimeric complexes.

Its subcellular location is the plastid. The protein localises to the chloroplast thylakoid membrane. In terms of biological role, one of the components of the core complex of photosystem II (PSII). PSII is a light-driven water:plastoquinone oxidoreductase that uses light energy to abstract electrons from H(2)O, generating O(2) and a proton gradient subsequently used for ATP formation. It consists of a core antenna complex that captures photons, and an electron transfer chain that converts photonic excitation into a charge separation. The chain is Photosystem II reaction center protein J from Chlamydomonas reinhardtii (Chlamydomonas smithii).